A 365-amino-acid chain; its full sequence is Cytosolic 5'-nucleotidase 1A (365 aa).

Positions 1–11 (MEPGQPREARE) are enriched in basic and acidic residues. Residues 1-23 (MEPGQPREAREPGPGAETAAVPR) form a disordered region. Aspartate 208 acts as the Nucleophile in catalysis.

The protein belongs to the 5'-nucleotidase type 3 family. Mg(2+) serves as cofactor.

It localises to the cytoplasm. It catalyses the reaction a ribonucleoside 5'-phosphate + H2O = a ribonucleoside + phosphate. It carries out the reaction a 2'-deoxyribonucleoside 5'-phosphate + H2O = a 2'-deoxyribonucleoside + phosphate. The enzyme catalyses IMP + H2O = inosine + phosphate. The catalysed reaction is AMP + H2O = adenosine + phosphate. It catalyses the reaction dCMP + H2O = 2'-deoxycytidine + phosphate. With respect to regulation, activated by ADP. Catalyzes the hydrolysis of ribonucleotide and deoxyribonucleotide monophosphates, releasing inorganic phosphate and the corresponding nucleoside. AMP is the major substrate but can also hydrolyze dCMP and IMP. The protein is Cytosolic 5'-nucleotidase 1A (Nt5c1a) of Mus musculus (Mouse).